We begin with the raw amino-acid sequence, 315 residues long: Ribonuclease Z (315 aa).

Residues His61, His63, Asp65, His66, His151, Asp219, and His278 each contribute to the Zn(2+) site. Catalysis depends on Asp65, which acts as the Proton acceptor.

This sequence belongs to the RNase Z family. In terms of assembly, homodimer. Zn(2+) serves as cofactor.

It catalyses the reaction Endonucleolytic cleavage of RNA, removing extra 3' nucleotides from tRNA precursor, generating 3' termini of tRNAs. A 3'-hydroxy group is left at the tRNA terminus and a 5'-phosphoryl group is left at the trailer molecule.. Its function is as follows. Zinc phosphodiesterase, which displays some tRNA 3'-processing endonuclease activity. Probably involved in tRNA maturation, by removing a 3'-trailer from precursor tRNA. This is Ribonuclease Z from Clostridium botulinum (strain Alaska E43 / Type E3).